A 445-amino-acid chain; its full sequence is Xylose isomerase (445 aa).

Catalysis depends on residues histidine 99 and aspartate 102. Residues glutamate 230, glutamate 266, histidine 269, aspartate 294, aspartate 305, aspartate 307, and aspartate 337 each coordinate Mg(2+).

This sequence belongs to the xylose isomerase family. As to quaternary structure, homotetramer. Mg(2+) serves as cofactor.

It is found in the cytoplasm. The catalysed reaction is alpha-D-xylose = alpha-D-xylulofuranose. In Geobacillus thermodenitrificans (strain NG80-2), this protein is Xylose isomerase.